Reading from the N-terminus, the 324-residue chain is Endochitinase B (324 aa).

The signal sequence occupies residues 1-23; sequence MRLREFTALSSLLFSLLLLSASA. The region spanning 24–65 is the Chitin-binding type-1 domain; sequence EQCGSQAGGARCASGLCCSKFGWCGNTNDYCGPGNCQSQCPG. 4 disulfides stabilise this stretch: cysteine 26–cysteine 41, cysteine 35–cysteine 47, cysteine 40–cysteine 54, and cysteine 59–cysteine 63. 2 positions are modified to 4-hydroxyproline: proline 67 and proline 69. Intrachain disulfides connect cysteine 96-cysteine 158, cysteine 170-cysteine 178, and cysteine 277-cysteine 309. The Proton donor role is filled by glutamate 140. Residues 318–324 constitute a propeptide, removed in mature form; it reads GLLVDTM.

Belongs to the glycosyl hydrolase 19 family. Chitinase class I subfamily. The 4-hydroxyproline residues are not glycosylated in this plant vacuolar protein.

It localises to the vacuole. It carries out the reaction Random endo-hydrolysis of N-acetyl-beta-D-glucosaminide (1-&gt;4)-beta-linkages in chitin and chitodextrins.. Defense against chitin-containing fungal pathogens. In Nicotiana tabacum (Common tobacco), this protein is Endochitinase B (CHN50).